The sequence spans 122 residues: Ribonuclease pancreatic (122 aa).

Lysine 6 and arginine 9 together coordinate substrate. The active-site Proton acceptor is histidine 11. Cystine bridges form between cysteine 25-cysteine 83, cysteine 39-cysteine 94, cysteine 57-cysteine 109, and cysteine 64-cysteine 71. Substrate is bound by residues 40 to 44 (KPVNT), lysine 65, and arginine 84. The active-site Proton donor is the histidine 117.

It belongs to the pancreatic ribonuclease family. As to quaternary structure, monomer. Interacts with and forms tight 1:1 complexes with RNH1. Dimerization of two such complexes may occur. Interaction with RNH1 inhibits this protein. As to expression, pancreas.

The protein resides in the secreted. It carries out the reaction an [RNA] containing cytidine + H2O = an [RNA]-3'-cytidine-3'-phosphate + a 5'-hydroxy-ribonucleotide-3'-[RNA].. It catalyses the reaction an [RNA] containing uridine + H2O = an [RNA]-3'-uridine-3'-phosphate + a 5'-hydroxy-ribonucleotide-3'-[RNA].. In terms of biological role, endonuclease that catalyzes the cleavage of RNA on the 3' side of pyrimidine nucleotides. Acts on single-stranded and double-stranded RNA. The protein is Ribonuclease pancreatic of Notamacropus rufogriseus (Red-necked wallaby).